A 221-amino-acid polypeptide reads, in one-letter code: 2-amino-5-formylamino-6-ribosylaminopyrimidin-4(3H)-one 5'-monophosphate deformylase (221 aa).

Residues E29, H31, D40, and H108 each contribute to the Fe cation site.

It belongs to the creatininase superfamily. FAPy deformylase family. As to quaternary structure, homodimer. The cofactor is Fe(2+). Requires Zn(2+) as cofactor.

The enzyme catalyses 2-amino-5-formylamino-6-(5-phospho-D-ribosylamino)pyrimidin-4(3H)-one + H2O = 2,5-diamino-6-(1-D-ribosylamino)pyrimidin-4(3H)-one 5'-phosphate + formate + H(+). It participates in cofactor biosynthesis; coenzyme F420 biosynthesis. Its pathway is cofactor biosynthesis; riboflavin biosynthesis. In terms of biological role, catalyzes the hydrolysis of the formamide of 2-amino-5-formylamino-6-ribosylamino-4(3H)-pyrimidinone 5'-monophosphate (FAPy) to form 2,5-diamino-6-ribosylamino-4(3H)-pyrimidinone 5'-phosphate (APy). The chain is 2-amino-5-formylamino-6-ribosylaminopyrimidin-4(3H)-one 5'-monophosphate deformylase from Methanococcus maripaludis (strain DSM 14266 / JCM 13030 / NBRC 101832 / S2 / LL).